A 331-amino-acid chain; its full sequence is Pectinesterase (331 aa).

The N-terminal stretch at 1–17 (MVKSILASVLFAATALA) is a signal peptide. Gln-138 contacts substrate. Asp-161 serves as the catalytic Proton donor. Asp-182 acts as the Nucleophile in catalysis. Substrate contacts are provided by Arg-247 and Trp-249.

It belongs to the pectinesterase family.

The protein localises to the secreted. It carries out the reaction [(1-&gt;4)-alpha-D-galacturonosyl methyl ester](n) + n H2O = [(1-&gt;4)-alpha-D-galacturonosyl](n) + n methanol + n H(+). It participates in glycan metabolism; pectin degradation; 2-dehydro-3-deoxy-D-gluconate from pectin: step 1/5. In terms of biological role, involved in maceration and soft-rotting of plant tissue. The protein is Pectinesterase (pme1) of Aspergillus niger.